A 1129-amino-acid chain; its full sequence is Translation initiation factor IF-2 (1129 aa).

Low complexity-rich tracts occupy residues 33–42 (AARSHSSSIS) and 56–99 (GGSP…AAKP). 2 disordered regions span residues 33-462 (AARS…IGEN) and 485-515 (SLARPSKPRTKHKPAPKPVAAIRKRRKETAR). Over residues 100–112 (SPKPSAPSRPEAP) the composition is skewed to pro residues. Over residues 135–147 (STPAAAAPAAAPS) the composition is skewed to low complexity. The segment covering 148-161 (APAPSAPTPRPKPT) has biased composition (pro residues). Positions 162–175 (APKASAPAPTASAP) are enriched in low complexity. Composition is skewed to pro residues over residues 176–191 (SAPPRPTSARPTPAPA) and 211–221 (PTAPPTRPQPK). Low complexity predominate over residues 257-273 (GQRPGVSPRPSGPPGQR). Basic and acidic residues predominate over residues 431-445 (GRPDWDDSAKLEALR). Basic residues-rich tracts occupy residues 490–499 (SKPRTKHKPA) and 506–515 (IRKRRKETAR). In terms of domain architecture, tr-type G spans 621–793 (RRPPVVTVMG…ILLVTEVEDL (173 aa)). Residues 630-637 (GHVDHGKT) form a G1 region. Position 630 to 637 (630 to 637 (GHVDHGKT)) interacts with GTP. The interval 655–659 (GITQH) is G2. Residues 680 to 683 (DTPG) are G3. GTP is bound by residues 680 to 684 (DTPGH) and 734 to 737 (NKID). The tract at residues 734–737 (NKID) is G4. The segment at 770–772 (SAL) is G5.

It belongs to the TRAFAC class translation factor GTPase superfamily. Classic translation factor GTPase family. IF-2 subfamily.

It localises to the cytoplasm. Functionally, one of the essential components for the initiation of protein synthesis. Protects formylmethionyl-tRNA from spontaneous hydrolysis and promotes its binding to the 30S ribosomal subunits. Also involved in the hydrolysis of GTP during the formation of the 70S ribosomal complex. The protein is Translation initiation factor IF-2 of Synechococcus sp. (strain CC9311).